Consider the following 390-residue polypeptide: 1-deoxy-D-xylulose 5-phosphate reductoisomerase (390 aa).

5 residues coordinate NADPH: Thr18, Gly19, Ser20, Ile21, and Asn130. Residue Lys131 participates in 1-deoxy-D-xylulose 5-phosphate binding. An NADPH-binding site is contributed by Glu132. Asp156 serves as a coordination point for Mn(2+). Residues Ser157, Glu158, Ser182, and His205 each coordinate 1-deoxy-D-xylulose 5-phosphate. Glu158 is a binding site for Mn(2+). Gly211 is a binding site for NADPH. Ser218, Asn223, Lys224, and Glu227 together coordinate 1-deoxy-D-xylulose 5-phosphate. Residue Glu227 coordinates Mn(2+).

This sequence belongs to the DXR family. Requires Mg(2+) as cofactor. The cofactor is Mn(2+).

It catalyses the reaction 2-C-methyl-D-erythritol 4-phosphate + NADP(+) = 1-deoxy-D-xylulose 5-phosphate + NADPH + H(+). It participates in isoprenoid biosynthesis; isopentenyl diphosphate biosynthesis via DXP pathway; isopentenyl diphosphate from 1-deoxy-D-xylulose 5-phosphate: step 1/6. In terms of biological role, catalyzes the NADPH-dependent rearrangement and reduction of 1-deoxy-D-xylulose-5-phosphate (DXP) to 2-C-methyl-D-erythritol 4-phosphate (MEP). This chain is 1-deoxy-D-xylulose 5-phosphate reductoisomerase, found in Bacteroides thetaiotaomicron (strain ATCC 29148 / DSM 2079 / JCM 5827 / CCUG 10774 / NCTC 10582 / VPI-5482 / E50).